The chain runs to 335 residues: DNA-directed RNA polymerase subunit alpha (335 aa).

The tract at residues 1-233 is alpha N-terminal domain (alpha-NTD); that stretch reads MMLNATEFLT…QQISIFVDLE (233 aa). The interval 247 to 335 is alpha C-terminal domain (alpha-CTD); sequence VDPVLLRPVD…VDDRFSYRSR (89 aa).

The protein belongs to the RNA polymerase alpha chain family. As to quaternary structure, homodimer. The RNAP catalytic core consists of 2 alpha, 1 beta, 1 beta' and 1 omega subunit. When a sigma factor is associated with the core the holoenzyme is formed, which can initiate transcription.

The enzyme catalyses RNA(n) + a ribonucleoside 5'-triphosphate = RNA(n+1) + diphosphate. In terms of biological role, DNA-dependent RNA polymerase catalyzes the transcription of DNA into RNA using the four ribonucleoside triphosphates as substrates. In Psychrobacter sp. (strain PRwf-1), this protein is DNA-directed RNA polymerase subunit alpha.